A 276-amino-acid chain; its full sequence is Small ribosomal subunit protein uS2 (276 aa).

Belongs to the universal ribosomal protein uS2 family.

This chain is Small ribosomal subunit protein uS2, found in Chlamydia caviae (strain ATCC VR-813 / DSM 19441 / 03DC25 / GPIC) (Chlamydophila caviae).